The primary structure comprises 325 residues: MASSSGSKAEFIVGGKYKLVRKIGSGSFGDIYLAINITNGEEVAVKLESQKARHPQLLYESKLYKILQGGVGIPHIRWYGQEKDYNVLVMDLLGPSLEDLFNFCSRRFTMKTVLMLADQMISRIEYVHTKNFIHRDIKPDNFLMGIGRHCNKLFLIDFGLAKKYRDNRTRQHIPYREDKNLTGTARYASINAHLGIEQSRRDDMESLGYVLMYFNRTSLPWQGLKAATKKQKYEKISEKKMSTPVEVLCKGFPAEFAMYLNYCRGLRFEEAPDYMYLRQLFRILFRTLNHQYDYTFDWTMLKQKAAQQAASSSGQGQQAQTPTGF.

A2 is modified (N-acetylalanine). Residue S4 is modified to Phosphoserine. K8 carries the post-translational modification N6-acetyllysine. The 269-residue stretch at Y17–F285 folds into the Protein kinase domain. Residues I23–I31 and K46 each bind ATP. The Proton acceptor role is filled by D136.

This sequence belongs to the protein kinase superfamily. CK1 Ser/Thr protein kinase family. Casein kinase I subfamily. As to quaternary structure, interacts with the Axin complex. Interacts with TUT1, leading to TUT1 phosphorylation. Interacts with FAM83A, FAM83B, FAM83C, FAM83D, FAM83E, FAM83F, FAM83G and FAM83H (via DUF1669). Interaction with FAM83H recruits CSNK1A1 to keratin filaments. Post-translationally, phosphorylated by MTOR in response to mitogenic stimulation, leading to its activation.

Its subcellular location is the cytoplasm. It is found in the cytoskeleton. The protein localises to the microtubule organizing center. It localises to the centrosome. The protein resides in the chromosome. Its subcellular location is the centromere. It is found in the kinetochore. The protein localises to the nucleus speckle. It localises to the cilium basal body. The protein resides in the spindle. It carries out the reaction L-seryl-[protein] + ATP = O-phospho-L-seryl-[protein] + ADP + H(+). The enzyme catalyses L-threonyl-[protein] + ATP = O-phospho-L-threonyl-[protein] + ADP + H(+). In terms of biological role, casein kinases are operationally defined by their preferential utilization of acidic proteins such as caseins as substrates. Can phosphorylate a large number of proteins. Participates in Wnt signaling. Phosphorylates CTNNB1 at 'Ser-45'. May phosphorylate PER1 and PER2. May play a role in segregating chromosomes during mitosis. May play a role in keratin cytoskeleton disassembly and thereby, it may regulate epithelial cell migration. Acts as a positive regulator of mTORC1 and mTORC2 signaling in response to nutrients by mediating phosphorylation of DEPTOR inhibitor. Acts as an inhibitor of NLRP3 inflammasome assembly by mediating phosphorylation of NLRP3. In Oryctolagus cuniculus (Rabbit), this protein is Casein kinase I isoform alpha (CSNK1A1).